The chain runs to 431 residues: Adenylosuccinate synthetase (431 aa).

GTP contacts are provided by residues 13-19 (GDEGKGK) and 41-43 (GHT). D14 serves as the catalytic Proton acceptor. Mg(2+) is bound by residues D14 and G41. Residues 14–17 (DEGK), 39–42 (NAGH), T130, R144, Q225, T240, and R306 contribute to the IMP site. H42 (proton donor) is an active-site residue. 302–308 (ATTGRQR) serves as a coordination point for substrate. GTP-binding positions include R308, 334–336 (KLD), and 416–418 (STG).

This sequence belongs to the adenylosuccinate synthetase family. In terms of assembly, homodimer. The cofactor is Mg(2+).

Its subcellular location is the cytoplasm. The catalysed reaction is IMP + L-aspartate + GTP = N(6)-(1,2-dicarboxyethyl)-AMP + GDP + phosphate + 2 H(+). The protein operates within purine metabolism; AMP biosynthesis via de novo pathway; AMP from IMP: step 1/2. Functionally, plays an important role in the de novo pathway of purine nucleotide biosynthesis. Catalyzes the first committed step in the biosynthesis of AMP from IMP. The sequence is that of Adenylosuccinate synthetase from Halorhodospira halophila (strain DSM 244 / SL1) (Ectothiorhodospira halophila (strain DSM 244 / SL1)).